We begin with the raw amino-acid sequence, 223 residues long: DNA mismatch repair protein MutH (223 aa).

It belongs to the MutH family.

It localises to the cytoplasm. Its function is as follows. Sequence-specific endonuclease that cleaves unmethylated GATC sequences. It is involved in DNA mismatch repair. This is DNA mismatch repair protein MutH from Shewanella baltica (strain OS185).